We begin with the raw amino-acid sequence, 669 residues long: DNA ligase (669 aa).

NAD(+) is bound by residues 31–35 (DSVYD), 80–81 (SL), and Glu-112. Residue Lys-114 is the N6-AMP-lysine intermediate of the active site. Arg-135, Glu-172, Lys-289, and Lys-313 together coordinate NAD(+). Zn(2+)-binding residues include Cys-407, Cys-410, Cys-425, and Cys-430. Positions 591–669 (TDSGKLKGKT…EAEFLQLLEP (79 aa)) constitute a BRCT domain.

Belongs to the NAD-dependent DNA ligase family. LigA subfamily. The cofactor is Mg(2+). Mn(2+) serves as cofactor.

The enzyme catalyses NAD(+) + (deoxyribonucleotide)n-3'-hydroxyl + 5'-phospho-(deoxyribonucleotide)m = (deoxyribonucleotide)n+m + AMP + beta-nicotinamide D-nucleotide.. In terms of biological role, DNA ligase that catalyzes the formation of phosphodiester linkages between 5'-phosphoryl and 3'-hydroxyl groups in double-stranded DNA using NAD as a coenzyme and as the energy source for the reaction. It is essential for DNA replication and repair of damaged DNA. This chain is DNA ligase, found in Synechocystis sp. (strain ATCC 27184 / PCC 6803 / Kazusa).